A 153-amino-acid chain; its full sequence is Endoribonuclease YbeY (153 aa).

Residues His-115, His-119, and His-125 each contribute to the Zn(2+) site.

Belongs to the endoribonuclease YbeY family. Requires Zn(2+) as cofactor.

The protein localises to the cytoplasm. Its function is as follows. Single strand-specific metallo-endoribonuclease involved in late-stage 70S ribosome quality control and in maturation of the 3' terminus of the 16S rRNA. The sequence is that of Endoribonuclease YbeY from Blochmanniella floridana.